A 102-amino-acid polypeptide reads, in one-letter code: NADH-quinone oxidoreductase subunit K (102 aa).

Transmembrane regions (helical) follow at residues 6–26 (LEHGLAVAGILFCLGLVGLMV), 30–50 (ILFVLMSLEVMMNASALAFVV), and 62–82 (VMFILVISLAAAEASIGLAIL).

It belongs to the complex I subunit 4L family. In terms of assembly, NDH-1 is composed of 13 different subunits. Subunits NuoA, H, J, K, L, M, N constitute the membrane sector of the complex.

The protein resides in the cell inner membrane. It carries out the reaction a quinone + NADH + 5 H(+)(in) = a quinol + NAD(+) + 4 H(+)(out). In terms of biological role, NDH-1 shuttles electrons from NADH, via FMN and iron-sulfur (Fe-S) centers, to quinones in the respiratory chain. The immediate electron acceptor for the enzyme in this species is believed to be ubiquinone. Couples the redox reaction to proton translocation (for every two electrons transferred, four hydrogen ions are translocated across the cytoplasmic membrane), and thus conserves the redox energy in a proton gradient. This chain is NADH-quinone oxidoreductase subunit K, found in Pseudomonas putida (strain ATCC 700007 / DSM 6899 / JCM 31910 / BCRC 17059 / LMG 24140 / F1).